A 301-amino-acid polypeptide reads, in one-letter code: MAKQIALPRSQTSPLFQWRAYYEMTKPKVVALMLLTVLVGMCLAVPGTVPLVPLIAGMAGIGMMAGSAAAFNHLIDRRIDGLMARTYNRPLPKGRISIIKAISFASILGTLGFIILYALVNPLTAWLTFASLIGYAVVYTAYLKRATPQNIVVGGLAGAMPPLLGWTAVTGEFHGNALLLVIIIFAWTPPHFWALAIHRKAEYAKVDIPMLPVTHGVEFTKTCIFLYTVLLAIACLLPVLVGMCGPVYLVSSTLLSAGFIYKAWQLKFHETPGLAMNVFKFSIYHLMLLFIALLVDHYLWV.

The next 9 helical transmembrane spans lie at 29-49 (VVALMLLTVLVGMCLAVPGTV), 51-71 (LVPLIAGMAGIGMMAGSAAAF), 96-116 (ISIIKAISFASILGTLGFIIL), 123-143 (LTAWLTFASLIGYAVVYTAYL), 151-171 (IVVGGLAGAMPPLLGWTAVTG), 177-197 (ALLLVIIIFAWTPPHFWALAI), 223-243 (CIFLYTVLLAIACLLPVLVGM), 244-264 (CGPVYLVSSTLLSAGFIYKAW), and 281-301 (FSIYHLMLLFIALLVDHYLWV).

Belongs to the UbiA prenyltransferase family. Protoheme IX farnesyltransferase subfamily.

Its subcellular location is the cell inner membrane. The catalysed reaction is heme b + (2E,6E)-farnesyl diphosphate + H2O = Fe(II)-heme o + diphosphate. Its pathway is porphyrin-containing compound metabolism; heme O biosynthesis; heme O from protoheme: step 1/1. Converts heme B (protoheme IX) to heme O by substitution of the vinyl group on carbon 2 of heme B porphyrin ring with a hydroxyethyl farnesyl side group. In Shewanella pealeana (strain ATCC 700345 / ANG-SQ1), this protein is Protoheme IX farnesyltransferase.